We begin with the raw amino-acid sequence, 198 residues long: DNA polymerase zeta subunit 2 (198 aa).

Positions 4-196 (EIKADIIVEA…DLGLKMDVLI (193 aa)) constitute an HORMA domain.

Belongs to the MAD2 family. Accessory subunit of the zeta DNA polymerase complex, which consists of the catalytic component PolZ1/DNApol-zeta and PolZ2/Rev7. Interacts with the apurinic/apyrimidinic (AP) endonuclease Rrp1 (via the N-terminus).

Its function is as follows. As the accessory component of the DNA polymerase zeta complex, involved in translesion DNA synthesis (TLS) and various DNA repair mechanisms. Promotes the apurinic/apyrimidinic (AP) endonuclease activity of Rrp1 and is therefore likely to be involved in the base excision repair (BER) pathway responsible for repair of DNA lesions. It does not appear to influence the synthesis activity of the catalytic component Dmpol-zeta. This Drosophila melanogaster (Fruit fly) protein is DNA polymerase zeta subunit 2.